A 415-amino-acid polypeptide reads, in one-letter code: tRNA(Ile2) 2-agmatinylcytidine synthetase TiaS (415 aa).

It belongs to the TiaS family.

Its subcellular location is the cytoplasm. The enzyme catalyses cytidine(34) in tRNA(Ile2) + agmatine + ATP + H2O = 2-agmatinylcytidine(34) in tRNA(Ile2) + AMP + 2 phosphate + 2 H(+). In terms of biological role, ATP-dependent agmatine transferase that catalyzes the formation of 2-agmatinylcytidine (agm2C) at the wobble position (C34) of tRNA(Ile2), converting the codon specificity from AUG to AUA. This Methanocorpusculum labreanum (strain ATCC 43576 / DSM 4855 / Z) protein is tRNA(Ile2) 2-agmatinylcytidine synthetase TiaS.